The chain runs to 483 residues: Glutamyl-tRNA(Gln) amidotransferase subunit A (483 aa).

Active-site charge relay system residues include lysine 76 and serine 151. Serine 175 (acyl-ester intermediate) is an active-site residue.

It belongs to the amidase family. GatA subfamily. As to quaternary structure, heterotrimer of A, B and C subunits.

The enzyme catalyses L-glutamyl-tRNA(Gln) + L-glutamine + ATP + H2O = L-glutaminyl-tRNA(Gln) + L-glutamate + ADP + phosphate + H(+). Functionally, allows the formation of correctly charged Gln-tRNA(Gln) through the transamidation of misacylated Glu-tRNA(Gln) in organisms which lack glutaminyl-tRNA synthetase. The reaction takes place in the presence of glutamine and ATP through an activated gamma-phospho-Glu-tRNA(Gln). This Pseudomonas fluorescens (strain ATCC BAA-477 / NRRL B-23932 / Pf-5) protein is Glutamyl-tRNA(Gln) amidotransferase subunit A.